The following is a 453-amino-acid chain: GTPase Der (453 aa).

EngA-type G domains lie at Pro4–Asp169 and Ile178–Arg353. GTP-binding positions include Gly10 to Ser17, Asp57 to Leu61, Asn120 to Glu123, Gly184 to Ser191, Asp231 to Ile235, and Asn296 to Asp299. The KH-like domain occupies Arg354–Lys439.

This sequence belongs to the TRAFAC class TrmE-Era-EngA-EngB-Septin-like GTPase superfamily. EngA (Der) GTPase family. Associates with the 50S ribosomal subunit.

Functionally, GTPase that plays an essential role in the late steps of ribosome biogenesis. This Synechococcus sp. (strain ATCC 27144 / PCC 6301 / SAUG 1402/1) (Anacystis nidulans) protein is GTPase Der.